Consider the following 278-residue polypeptide: WLMGHMVNAVKQIPTFLNDGANAIEADITFKGAVPTYSYHGTPCDFGRDCIRWEYFDVFLQTLRDYTTPGNSKYYEKFILFVLDLKTGSLNNNEVRKAGENVAKGLLKNYWNDGNSGGRAYVVLSLPDIAHYEFIRTFKEVLKAEGHEDLLDKVGYDLSGPYLPSLPSLDSVHEAFKKAGVDGHVWLSDGLTNWAPLGDMARLKEIVKRRDSENGFISKVYYWSVDRYSTTRTALDVGVDGIMTNFPYVIIDVLNENGYKDKYRLATYDDNPWETFKK.

H5 is a catalytic residue. E25 and D27 together coordinate Mg(2+). The Nucleophile role is filled by H40. Residues C44 and C50 are joined by a disulfide bond. Mg(2+) is bound at residue D84.

Belongs to the arthropod phospholipase D family. Class I subfamily. Requires Mg(2+) as cofactor. Expressed by the venom gland.

Its subcellular location is the secreted. It catalyses the reaction an N-(acyl)-sphingosylphosphocholine = an N-(acyl)-sphingosyl-1,3-cyclic phosphate + choline. It carries out the reaction an N-(acyl)-sphingosylphosphoethanolamine = an N-(acyl)-sphingosyl-1,3-cyclic phosphate + ethanolamine. The enzyme catalyses a 1-acyl-sn-glycero-3-phosphocholine = a 1-acyl-sn-glycero-2,3-cyclic phosphate + choline. The catalysed reaction is a 1-acyl-sn-glycero-3-phosphoethanolamine = a 1-acyl-sn-glycero-2,3-cyclic phosphate + ethanolamine. Functionally, dermonecrotic toxins cleave the phosphodiester linkage between the phosphate and headgroup of certain phospholipids (sphingolipid and lysolipid substrates), forming an alcohol (often choline) and a cyclic phosphate. This toxin acts on sphingomyelin (SM). It may also act on ceramide phosphoethanolamine (CPE), lysophosphatidylcholine (LPC) and lysophosphatidylethanolamine (LPE), but not on lysophosphatidylserine (LPS), and lysophosphatidylglycerol (LPG). It acts by transphosphatidylation, releasing exclusively cyclic phosphate products as second products. Induces dermonecrosis, hemolysis, increased vascular permeability, edema, inflammatory response, and platelet aggregation. The chain is Dermonecrotic toxin LlSicTox-alphaIII3ii from Loxosceles laeta (South American recluse spider).